Reading from the N-terminus, the 478-residue chain is Proline--tRNA ligase (478 aa).

This sequence belongs to the class-II aminoacyl-tRNA synthetase family. ProS type 3 subfamily. As to quaternary structure, homodimer.

The protein localises to the cytoplasm. It catalyses the reaction tRNA(Pro) + L-proline + ATP = L-prolyl-tRNA(Pro) + AMP + diphosphate. Functionally, catalyzes the attachment of proline to tRNA(Pro) in a two-step reaction: proline is first activated by ATP to form Pro-AMP and then transferred to the acceptor end of tRNA(Pro). This is Proline--tRNA ligase from Clostridium botulinum (strain Loch Maree / Type A3).